We begin with the raw amino-acid sequence, 121 residues long: NADH-ubiquinone oxidoreductase chain 3 (121 aa).

The next 3 membrane-spanning stretches (helical) occupy residues 11 to 31, 63 to 83, and 90 to 110; these read ILTF…LSYF, FYLV…LFPW, and LSIF…LGFI.

This sequence belongs to the complex I subunit 3 family.

It localises to the mitochondrion membrane. The enzyme catalyses a ubiquinone + NADH + 5 H(+)(in) = a ubiquinol + NAD(+) + 4 H(+)(out). Core subunit of the mitochondrial membrane respiratory chain NADH dehydrogenase (Complex I) that is believed to belong to the minimal assembly required for catalysis. Complex I functions in the transfer of electrons from NADH to the respiratory chain. The immediate electron acceptor for the enzyme is believed to be ubiquinone. The sequence is that of NADH-ubiquinone oxidoreductase chain 3 (NAD3) from Porphyra purpurea (Red seaweed).